A 566-amino-acid polypeptide reads, in one-letter code: CTP synthase (566 aa).

Residues 1-282 (MSIKRAQLGG…DAYIIDQLGL (282 aa)) form an amidoligase domain region. Residue Ser23 coordinates CTP. Residue Ser23 participates in UTP binding. Residues 24–29 (SLGKGL) and Asp81 each bind ATP. Positions 81 and 156 each coordinate Mg(2+). CTP is bound by residues 163 to 165 (DIE), 203 to 208 (KTKPTQ), and Lys239. UTP-binding positions include 203–208 (KTKPTQ) and Lys239. Positions 308–556 (TIGLVGKYID…IGAALDRQKA (249 aa)) constitute a Glutamine amidotransferase type-1 domain. Gly371 lines the L-glutamine pocket. The active-site Nucleophile; for glutamine hydrolysis is the Cys398. L-glutamine is bound by residues 399-402 (LGLQ), Glu422, and Arg482. Catalysis depends on residues His529 and Glu531.

This sequence belongs to the CTP synthase family. As to quaternary structure, homotetramer.

It catalyses the reaction UTP + L-glutamine + ATP + H2O = CTP + L-glutamate + ADP + phosphate + 2 H(+). It carries out the reaction L-glutamine + H2O = L-glutamate + NH4(+). The enzyme catalyses UTP + NH4(+) + ATP = CTP + ADP + phosphate + 2 H(+). Its pathway is pyrimidine metabolism; CTP biosynthesis via de novo pathway; CTP from UDP: step 2/2. Its activity is regulated as follows. Allosterically activated by GTP, when glutamine is the substrate; GTP has no effect on the reaction when ammonia is the substrate. The allosteric effector GTP functions by stabilizing the protein conformation that binds the tetrahedral intermediate(s) formed during glutamine hydrolysis. Inhibited by the product CTP, via allosteric rather than competitive inhibition. Catalyzes the ATP-dependent amination of UTP to CTP with either L-glutamine or ammonia as the source of nitrogen. Regulates intracellular CTP levels through interactions with the four ribonucleotide triphosphates. This Leifsonia xyli subsp. xyli (strain CTCB07) protein is CTP synthase.